The following is a 963-amino-acid chain: MAAHLKKRVYEEFTKVVQPQEEIATKKLRLTKPSKSAALHIDLCKATSPADALQYLLQFARKPVEAESVEGVVRILLEHYYKENDPSVRLKIASLLGLLSKTAGFSPDCIMDDAINILQNEKSHQVLAQLLDTLLAIGTKLPENQAIQMRLVDVACKHLTDTSHGVRNKCLQLLGNLGSLEKSVTKDAEGLAARDVQKIIGDYFSDQDPRVRTAAIKAMLQLHERGLKLHQTIYNQACKLLSDDYEQVRSAAVQLIWVVSQLYPESIVPIPSSNEEIRLVDDAFGKICHMVSDGSWVVRVQAAKLLGSMEQVSSHFLEQTLDKKLMSDLRRKRTAHERAKELYSSGEFSSGRKWGDDAPKEEVDTGAVNLIESGACGAFVHGLEDEMYEVRIAAVEALCMLAQSSPSFAEKCLDFLVDMFNDEIEEVRLQSIHTMRKISNNITLREDQLDTVLAVLEDSSRDIREALHELLCCTNVSTKEGIHLALVELLKNLTKYPTDRDSIWKCLKFLGSRHPTLVLPLVPELLSTHPFFDTAEPDMDDPAYIAVLVLIFNAAKTCPTMPALFSDHTFRHYAYLRDSLSHLVPALRLPGRKLVSSAVSPSIIPQEDPSQQFLQQSLERVYSLQHLDPQGAQELLEFTIRDLQRLGELQSELAGVADFSATYLRCQLLLIKALQEKLWNVAAPLYLKQSDLASAAAKQIMEETYKMEFMYSGVENKQVVIIHHMRLQAKALQLIVTARTTRGLDPLFGMCEKFLQEVDFFQRYFIADLPHLQDSFVDKLLDLMPRLMTSKPAEVVKILQTMLRQSAFLHLPLPEQIHKASATIIEPAGESDNPLRFTSGLVVALDVDATLEHVQDPQNTVKVQVLYPDGQAQMIHPKPADFRNPGPGRHRLITQVYLSHTAWTEACQVEVRLLLAYNSSARIPKCPWMEGGEMSPQVETSIEGTIPFSKPVKVYIMPKPARR.

At lysine 26 the chain carries N6-acetyllysine. HEAT repeat units follow at residues 66-105 (AESV…TAGF), 145-183 (QAIQ…LEKS), 190-228 (GLAA…RGLK), 229-263 (LHQT…SQLY), 277-313 (IRLV…EQVS), 369-405 (NLIE…AQSS), 406-444 (PSFA…NITL), and 446-484 (EDQL…GIHL). Lysine 791 is covalently cross-linked (Glycyl lysine isopeptide (Lys-Gly) (interchain with G-Cter in SUMO1); alternate). Residue lysine 791 forms a Glycyl lysine isopeptide (Lys-Gly) (interchain with G-Cter in SUMO2); alternate linkage.

It belongs to the Integrator subunit 4 family. Component of the Integrator complex, composed of core subunits INTS1, INTS2, INTS3, INTS4, INTS5, INTS6, INTS7, INTS8, INTS9/RC74, INTS10, INTS11/CPSF3L, INTS12, INTS13, INTS14 and INTS15. The core complex associates with protein phosphatase 2A subunits PPP2CA and PPP2R1A, to form the Integrator-PP2A (INTAC) complex. INTS4 is part of the RNA endonuclease subcomplex, composed of INTS4, INTS9, INTS11 and inositol hexakisphosphate (InsP6). Interacts with BRAT1; interaction is required for the assembly of the RNA endonuclease subcomplex.

It is found in the nucleus. It localises to the cytoplasm. Component of the integrator complex, a multiprotein complex that terminates RNA polymerase II (Pol II) transcription in the promoter-proximal region of genes. The integrator complex provides a quality checkpoint during transcription elongation by driving premature transcription termination of transcripts that are unfavorably configured for transcriptional elongation: the complex terminates transcription by (1) catalyzing dephosphorylation of the C-terminal domain (CTD) of Pol II subunit POLR2A/RPB1 and SUPT5H/SPT5, (2) degrading the exiting nascent RNA transcript via endonuclease activity and (3) promoting the release of Pol II from bound DNA. The integrator complex is also involved in terminating the synthesis of non-coding Pol II transcripts, such as enhancer RNAs (eRNAs), small nuclear RNAs (snRNAs), telomerase RNAs and long non-coding RNAs (lncRNAs). Within the integrator complex, INTS4 acts as an scaffold that links INTS9 and INTS11. Mediates recruitment of cytoplasmic dynein to the nuclear envelope, probably as component of the integrator complex. This is Integrator complex subunit 4 from Homo sapiens (Human).